Consider the following 345-residue polypeptide: D-alanine--D-alanine ligase (345 aa).

One can recognise an ATP-grasp domain in the interval 133-332 (KWLCHARGVK…LPHTKRAKVT (200 aa)). 160-211 (AYPIIVKPSRLGSSIGVSIVKDESKLDYALDSAFEFDNTVIVEPFLEGVKEY) is an ATP binding site. Residues Asp-284, Glu-296, and Asn-298 each contribute to the Mg(2+) site.

This sequence belongs to the D-alanine--D-alanine ligase family. Mg(2+) serves as cofactor. It depends on Mn(2+) as a cofactor.

The protein resides in the cytoplasm. It catalyses the reaction 2 D-alanine + ATP = D-alanyl-D-alanine + ADP + phosphate + H(+). It participates in cell wall biogenesis; peptidoglycan biosynthesis. Functionally, cell wall formation. The sequence is that of D-alanine--D-alanine ligase from Sulfurimonas denitrificans (strain ATCC 33889 / DSM 1251) (Thiomicrospira denitrificans (strain ATCC 33889 / DSM 1251)).